The sequence spans 453 residues: Serine/threonine-protein phosphatase 2A regulatory subunit B'' subunit gamma (453 aa).

EF-hand domains lie at 273-308 (PSAL…TMTN) and 341-376 (KEPA…IQEL). Residues Asp286, Asp288, Asn290, Met292, and Glu297 each coordinate Ca(2+).

In terms of assembly, interacts with MCM3AP/GANP. Interacts with PPP5C, and the phosphatase 2A core enzyme composed of the PPP2CA catalytic subunit and the constant regulatory subunit PPP2R1A. Finds in a complex with ABCB1, TFPI2 and PPP2R3C; leading to the dephosphorylation of ABCB1. In terms of tissue distribution, ubiquitously expressed in brain and other tissues.

The protein resides in the nucleus. The protein localises to the cytoplasm. May regulate MCM3AP phosphorylation through phosphatase recruitment. May act as a negative regulator of ABCB1 expression and function through the dephosphorylation of ABCB1 by TFPI2/PPP2R3C complex. May play a role in the activation-induced cell death of B-cells. This chain is Serine/threonine-protein phosphatase 2A regulatory subunit B'' subunit gamma (PPP2R3C), found in Homo sapiens (Human).